The sequence spans 236 residues: 2-C-methyl-D-erythritol 4-phosphate cytidylyltransferase (236 aa).

The protein belongs to the IspD/TarI cytidylyltransferase family. IspD subfamily. In terms of assembly, homodimer.

It carries out the reaction 2-C-methyl-D-erythritol 4-phosphate + CTP + H(+) = 4-CDP-2-C-methyl-D-erythritol + diphosphate. It functions in the pathway isoprenoid biosynthesis; isopentenyl diphosphate biosynthesis via DXP pathway; isopentenyl diphosphate from 1-deoxy-D-xylulose 5-phosphate: step 2/6. Catalyzes the formation of 4-diphosphocytidyl-2-C-methyl-D-erythritol from CTP and 2-C-methyl-D-erythritol 4-phosphate (MEP). This Enterobacter sp. (strain 638) protein is 2-C-methyl-D-erythritol 4-phosphate cytidylyltransferase.